Here is a 224-residue protein sequence, read N- to C-terminus: uncharacterized protein (224 aa).

The signal sequence occupies residues 1–30; that stretch reads MSRSSSSMATVLVVLMVVSAGGLSPPCAAA. The N-linked (GlcNAc...) asparagine glycan is linked to asparagine 141.

It is found in the secreted. This is an uncharacterized protein from Oryza sativa subsp. japonica (Rice).